The primary structure comprises 287 residues: Kit ligand (287 aa).

The first 25 residues, 1 to 25 (MKKAQTWIITCFCLQLLLLNPLVKT), serve as a signal peptide directing secretion. The Extracellular portion of the chain corresponds to 26 to 225 (QSSCGNPVTD…LGFISSSSLQ (200 aa)). 2 disulfide bridges follow: C29-C117 and C68-C167. N-linked (GlcNAc...) asparagine glycosylation is found at N100, N106, N149, N178, N200, and N206. A helical membrane pass occupies residues 226-246 (GISIALTSLLSLLIGFILGVI). Over 247-287 (YWKKTHPKSRPESNETTQCHGCQEENEISMLQQKEKEHLQV) the chain is Cytoplasmic.

This sequence belongs to the SCF family. As to quaternary structure, homodimer, non-covalently linked. In terms of processing, a soluble form is produced by proteolytic processing of isoform 1 in the extracellular domain.

The protein resides in the cell membrane. It is found in the secreted. Its subcellular location is the cytoplasm. It localises to the cytoskeleton. The protein localises to the cell projection. The protein resides in the lamellipodium. It is found in the filopodium. Functionally, ligand for the receptor-type protein-tyrosine kinase KIT. Plays an essential role in the regulation of cell survival and proliferation, hematopoiesis, stem cell maintenance, gametogenesis, mast cell development, migration and function, and in melanogenesis. KITLG/SCF binding can activate several signaling pathways. Acts synergistically with other cytokines, probably interleukins. The chain is Kit ligand (KITLG) from Coturnix japonica (Japanese quail).